The following is a 310-amino-acid chain: Ribonuclease Z (310 aa).

The Zn(2+) site is built by His-64, His-66, Asp-68, His-69, His-142, Asp-213, and His-271. Asp-68 (proton acceptor) is an active-site residue.

This sequence belongs to the RNase Z family. As to quaternary structure, homodimer. Zn(2+) serves as cofactor.

The enzyme catalyses Endonucleolytic cleavage of RNA, removing extra 3' nucleotides from tRNA precursor, generating 3' termini of tRNAs. A 3'-hydroxy group is left at the tRNA terminus and a 5'-phosphoryl group is left at the trailer molecule.. Its function is as follows. Zinc phosphodiesterase, which displays some tRNA 3'-processing endonuclease activity. Probably involved in tRNA maturation, by removing a 3'-trailer from precursor tRNA. In Treponema pallidum (strain Nichols), this protein is Ribonuclease Z.